The sequence spans 524 residues: GMP synthase [glutamine-hydrolyzing] (524 aa).

Positions 7 to 196 (PVLVVDFGAQ…LHELAGIPAS (190 aa)) constitute a Glutamine amidotransferase type-1 domain. The Nucleophile role is filled by Cys84. Residues His170 and Glu172 contribute to the active site. The GMPS ATP-PPase domain maps to 197–398 (WTPSNIADVL…LGLPEEIVAR (202 aa)). Position 224-230 (224-230 (SGGVDSA)) interacts with ATP.

As to quaternary structure, homodimer.

It carries out the reaction XMP + L-glutamine + ATP + H2O = GMP + L-glutamate + AMP + diphosphate + 2 H(+). It participates in purine metabolism; GMP biosynthesis; GMP from XMP (L-Gln route): step 1/1. Catalyzes the synthesis of GMP from XMP. This chain is GMP synthase [glutamine-hydrolyzing], found in Nocardia farcinica (strain IFM 10152).